Reading from the N-terminus, the 239-residue chain is UDP-2,3-diacylglucosamine hydrolase (239 aa).

5 residues coordinate Mn(2+): aspartate 8, histidine 10, aspartate 41, asparagine 79, and histidine 114. 79–80 (NR) provides a ligand contact to substrate. Substrate contacts are provided by aspartate 122, serine 160, asparagine 164, lysine 167, and histidine 195. Histidine 195 and histidine 197 together coordinate Mn(2+).

Belongs to the LpxH family. Mn(2+) serves as cofactor.

The protein localises to the cell inner membrane. The catalysed reaction is UDP-2-N,3-O-bis[(3R)-3-hydroxytetradecanoyl]-alpha-D-glucosamine + H2O = 2-N,3-O-bis[(3R)-3-hydroxytetradecanoyl]-alpha-D-glucosaminyl 1-phosphate + UMP + 2 H(+). It functions in the pathway glycolipid biosynthesis; lipid IV(A) biosynthesis; lipid IV(A) from (3R)-3-hydroxytetradecanoyl-[acyl-carrier-protein] and UDP-N-acetyl-alpha-D-glucosamine: step 4/6. Its function is as follows. Hydrolyzes the pyrophosphate bond of UDP-2,3-diacylglucosamine to yield 2,3-diacylglucosamine 1-phosphate (lipid X) and UMP by catalyzing the attack of water at the alpha-P atom. Involved in the biosynthesis of lipid A, a phosphorylated glycolipid that anchors the lipopolysaccharide to the outer membrane of the cell. The polypeptide is UDP-2,3-diacylglucosamine hydrolase (Sodalis glossinidius (strain morsitans)).